The sequence spans 292 residues: Homoserine kinase (292 aa).

84–94 (PISRGLGSSSA) contributes to the ATP binding site.

Belongs to the GHMP kinase family. Homoserine kinase subfamily.

The protein resides in the cytoplasm. It carries out the reaction L-homoserine + ATP = O-phospho-L-homoserine + ADP + H(+). It functions in the pathway amino-acid biosynthesis; L-threonine biosynthesis; L-threonine from L-aspartate: step 4/5. Its function is as follows. Catalyzes the ATP-dependent phosphorylation of L-homoserine to L-homoserine phosphate. The sequence is that of Homoserine kinase from Sulfurovum sp. (strain NBC37-1).